The sequence spans 297 residues: Probable endonuclease 4 (297 aa).

9 residues coordinate Zn(2+): histidine 69, histidine 110, glutamate 145, aspartate 179, histidine 182, histidine 214, aspartate 227, histidine 229, and glutamate 259.

It belongs to the AP endonuclease 2 family. Zn(2+) is required as a cofactor.

It carries out the reaction Endonucleolytic cleavage to 5'-phosphooligonucleotide end-products.. Its function is as follows. Endonuclease IV plays a role in DNA repair. It cleaves phosphodiester bonds at apurinic or apyrimidinic (AP) sites, generating a 3'-hydroxyl group and a 5'-terminal sugar phosphate. The chain is Probable endonuclease 4 from Listeria welshimeri serovar 6b (strain ATCC 35897 / DSM 20650 / CCUG 15529 / CIP 8149 / NCTC 11857 / SLCC 5334 / V8).